A 245-amino-acid chain; its full sequence is Eukaryotic translation initiation factor 6 (245 aa).

Residues Ser174 and Ser175 each carry the phosphoserine; by CK1 modification.

Belongs to the eIF-6 family. Monomer. Associates with the 60S ribosomal subunit. Phosphorylation at Ser-174 and Ser-175 promotes nuclear export.

Its subcellular location is the cytoplasm. It is found in the nucleus. It localises to the nucleolus. Binds to the 60S ribosomal subunit and prevents its association with the 40S ribosomal subunit to form the 80S initiation complex in the cytoplasm. Is also involved in ribosome biogenesis. Associates with pre-60S subunits in the nucleus and is involved in its nuclear export. The chain is Eukaryotic translation initiation factor 6 from Candida albicans (strain SC5314 / ATCC MYA-2876) (Yeast).